We begin with the raw amino-acid sequence, 310 residues long: N-acetyl-gamma-glutamyl-phosphate reductase (310 aa).

Cys-117 is an active-site residue.

The protein belongs to the NAGSA dehydrogenase family. Type 2 subfamily.

Its subcellular location is the cytoplasm. The enzyme catalyses N-acetyl-L-glutamate 5-semialdehyde + phosphate + NADP(+) = N-acetyl-L-glutamyl 5-phosphate + NADPH + H(+). It participates in amino-acid biosynthesis; L-arginine biosynthesis; N(2)-acetyl-L-ornithine from L-glutamate: step 3/4. Catalyzes the NADPH-dependent reduction of N-acetyl-5-glutamyl phosphate to yield N-acetyl-L-glutamate 5-semialdehyde. This is N-acetyl-gamma-glutamyl-phosphate reductase from Rhizobium meliloti (strain 1021) (Ensifer meliloti).